We begin with the raw amino-acid sequence, 172 residues long: Type IV secretion system putative outer membrane lipoprotein BRA0058/BS1330_II0058 (172 aa).

Residues 1 to 15 (MRTLVMVACAVSLAA) form the signal peptide. Residue C16 is the site of N-palmitoyl cysteine attachment. C16 is lipidated: S-diacylglycerol cysteine. Residues 58–172 (WPARPPKQTV…RRVDIEILRK (115 aa)) form the OmpA-like domain.

Its subcellular location is the cell outer membrane. In terms of biological role, the VirB system could be required for the establishment of the replication niche in the host. This chain is Type IV secretion system putative outer membrane lipoprotein BRA0058/BS1330_II0058, found in Brucella suis biovar 1 (strain 1330).